Consider the following 159-residue polypeptide: uncharacterized protein (159 aa).

This is an uncharacterized protein from Acanthamoeba polyphaga (Amoeba).